The following is a 746-amino-acid chain: Iron-sulfur clusters transporter ABCB7, mitochondrial (746 aa).

The N-terminal 19 residues, 1–19 (MAPMLVSLNCGIRVQRRTL), are a transit peptide targeting the mitochondrion. The Mitochondrial matrix segment spans residues 20 to 133 (TLLIRQTSSY…KDRPDLRARV (114 aa)). Positions 133-429 (VAVSLGLLAG…LGTVYRETRQ (297 aa)) constitute an ABC transmembrane type-1 domain. A helical membrane pass occupies residues 134–154 (AVSLGLLAGAKLTNVMVPFMF). Over 155–176 (KYAVDELNQMSGHMLNLNDAPS) the chain is Mitochondrial intermembrane. A helical membrane pass occupies residues 177–199 (TVATMTTAVLIGYGVSRAGSALF). Residues 200–252 (NELRNTVFGKVAQSSIRRIAKNVFLHLHNLDLGFHLSRQTGALSKAIDRGTRG) are Mitochondrial matrix-facing. Residues 253 to 273 (ISFVLSALVFNLGPTVFEMFL) form a helical membrane-spanning segment. Residues 274-283 (VSAILYYKCG) lie on the Mitochondrial intermembrane side of the membrane. The helical transmembrane segment at 284–304 (GEFAAVALGTLSAYTIFTILV) threads the bilayer. Residues 305 to 375 (TQWRTRFRIE…TLAMLNFGQS (71 aa)) are Mitochondrial matrix-facing. Glutathione is bound by residues 308-312 (RTRFR) and 371-374 (NFGQ). Residues 376-396 (AIFSVGLTAIMLLASKGIAAG) form a helical membrane-spanning segment. Topologically, residues 397 to 402 (NMTVGD) are mitochondrial intermembrane. Residues 403-423 (LVMVNGLLFQLSLPLNFLGTV) form a helical membrane-spanning segment. Gly421 is a binding site for glutathione. Over 424 to 746 (YRETRQALID…SVKGCGNCSC (323 aa)) the chain is Mitochondrial matrix. The region spanning 465–699 (IRFEDVYFEY…PGSLYAELWN (235 aa)) is the ABC transporter domain. ATP-binding positions include Tyr474 and 498 to 505 (GGSGSGKS). A disordered region spans residues 708–728 (SRKSSSAPAAERLSQKEEERK).

It belongs to the ABC transporter superfamily. ABCB family. Heavy Metal importer (TC 3.A.1.210) subfamily. In terms of assembly, homodimer.

The protein localises to the mitochondrion inner membrane. It localises to the mitochondrion. The enzyme catalyses (glutathione)4[2Fe(III)-2S] cluster(in) + ATP + H2O = (glutathione)4[2Fe(III)-2S] cluster(out) + ADP + phosphate + H(+). Functionally, exports glutathione-coordinated iron-sulfur clusters such as [2Fe-2S]-(GS)4 cluster from the mitochondria to the cytosol in an ATP-dependent manner allowing the assembly of the cytosolic iron-sulfur (Fe/S) cluster-containing proteins and participates in iron homeostasis. May play a role in iron and lipid metabolism. In Oryzias latipes (Japanese rice fish), this protein is Iron-sulfur clusters transporter ABCB7, mitochondrial.